A 28-amino-acid chain; its full sequence is M-poneritoxin-Da4b (28 aa).

Residue A28 is modified to Alanine amide.

In terms of tissue distribution, expressed by the venom gland.

Its subcellular location is the secreted. In terms of biological role, the synthetic peptide has antimicrobial activity against the Gram-positive bacteria B.amyloliquefacies S499 (MIC=0.05 mM), L.monocytogenes 2231 and S.aureus ATCC 29213, against the Gram-negative bacteria P.putida BTP1, P.aeruginosa PaO1 and E.coli ATCC 10536, and against the fungi S.cerevisiae, R.mucilaginosa and C.cucumerinum. It is not active against the fungi F.oxysporum and B.cinerea. This is M-poneritoxin-Da4b from Dinoponera australis (Giant neotropical hunting ant).